The following is a 504-amino-acid chain: MDLVSALSLETWVLLAISLVLLYRYGTRKHELFKKQGIPGPKPLPFLGTVLNYYKGLWKFDMECYKKYGKTWGLFDGQTPLLAVTDPETIKNVLVKECFSVFTNRRDFGPVGIMSKAISISKDDEWKRYRALLSPTFTSGKLKEMFPVIEQYGDILVKYLRQKAKKGKPVTMKDVLGAYSMDVITSTSFGVNVDSLNNPEDPFVEKAKKLLRFDFFDPLLFSVVLFPFLTPVYEMLNICMFPKDSIEFFKKFVDRMKESRLDSKQKHRVDFLQLMMNSHNNSKDKVSHKALSDMEITAQSIIFIFAGYETTSSTLSFTLHSLATHPDIQKKLQDEIDEALPNKAPPTYDTVMEMEYLDMVLNETLRLYPIANRLERVCKKDVELNGVYIPKGSTVMIPSYALHHDPQHWSEPEEFQPERFSKENKGSIDPYVYLPFGNGPRNCLGMRFALMNMKLALTKIMQNFSFQPCKETQIPLKLSRQGLLQPEKPIVLKVVPRDAVITGA.

Cysteine 443 provides a ligand contact to heme.

The protein belongs to the cytochrome P450 family. Requires heme as cofactor. In terms of tissue distribution, highly expressed in liver.

Its subcellular location is the endoplasmic reticulum membrane. The protein localises to the microsome membrane. The catalysed reaction is an organic molecule + reduced [NADPH--hemoprotein reductase] + O2 = an alcohol + oxidized [NADPH--hemoprotein reductase] + H2O + H(+). Its function is as follows. Catalyzes erythromycin N-demethylation, nifedipine oxidation and testosterone 6 beta-hydroxylation. This is Cytochrome P450 3A11 (Cyp3a11) from Mus musculus (Mouse).